The primary structure comprises 192 residues: Adenylate kinase (192 aa).

12 to 17 (GSGKTT) serves as a coordination point for ATP. An NMP region spans residues 33-62 (STGDLLRAEVAKDSELGKKIDKIISGGNLV). AMP contacts are provided by residues T34, R39, 60-62 (NLV), 87-90 (GYPR), and Q94. The interval 129-135 (GRARGAD) is LID. R130 is a binding site for ATP. 2 residues coordinate AMP: R132 and R144. Residue R172 coordinates ATP.

It belongs to the adenylate kinase family. Monomer.

The protein resides in the cytoplasm. The catalysed reaction is AMP + ATP = 2 ADP. Its pathway is purine metabolism; AMP biosynthesis via salvage pathway; AMP from ADP: step 1/1. In terms of biological role, catalyzes the reversible transfer of the terminal phosphate group between ATP and AMP. Plays an important role in cellular energy homeostasis and in adenine nucleotide metabolism. This is Adenylate kinase from Campylobacter hominis (strain ATCC BAA-381 / DSM 21671 / CCUG 45161 / LMG 19568 / NCTC 13146 / CH001A).